Consider the following 151-residue polypeptide: Ribosome maturation factor RimP (151 aa).

Belongs to the RimP family.

It is found in the cytoplasm. Its function is as follows. Required for maturation of 30S ribosomal subunits. This chain is Ribosome maturation factor RimP, found in Crocosphaera subtropica (strain ATCC 51142 / BH68) (Cyanothece sp. (strain ATCC 51142)).